A 154-amino-acid chain; its full sequence is SsrA-binding protein (154 aa).

The interval 130 to 154 (KLHDKRETERRRQDQRDIQRAIKRA) is disordered. A compositionally biased stretch (basic and acidic residues) spans 133–154 (DKRETERRRQDQRDIQRAIKRA).

It belongs to the SmpB family.

It is found in the cytoplasm. Functionally, required for rescue of stalled ribosomes mediated by trans-translation. Binds to transfer-messenger RNA (tmRNA), required for stable association of tmRNA with ribosomes. tmRNA and SmpB together mimic tRNA shape, replacing the anticodon stem-loop with SmpB. tmRNA is encoded by the ssrA gene; the 2 termini fold to resemble tRNA(Ala) and it encodes a 'tag peptide', a short internal open reading frame. During trans-translation Ala-aminoacylated tmRNA acts like a tRNA, entering the A-site of stalled ribosomes, displacing the stalled mRNA. The ribosome then switches to translate the ORF on the tmRNA; the nascent peptide is terminated with the 'tag peptide' encoded by the tmRNA and targeted for degradation. The ribosome is freed to recommence translation, which seems to be the essential function of trans-translation. The chain is SsrA-binding protein from Synechococcus elongatus (strain ATCC 33912 / PCC 7942 / FACHB-805) (Anacystis nidulans R2).